The chain runs to 292 residues: High-affinity heme uptake system protein IsdE (292 aa).

Positions 1–19 (MRIIKYLTILVISVVILTS) are cleaved as a signal peptide. Cys20 is lipidated: N-palmitoyl cysteine. A lipid anchor (S-diacylglycerol cysteine) is attached at Cys20. One can recognise a Fe/B12 periplasmic-binding domain in the interval 35 to 291 (RIVPTTVALT…QLYDLFYKDK (257 aa)). 6 residues coordinate heme: Val41, Ala42, Ser60, Tyr61, Met78, and His229.

This sequence belongs to the bacterial solute-binding protein 8 family. Requires heme b as cofactor.

It localises to the cell membrane. In terms of biological role, involved in heme (porphyrin) scavenging. Binds Fe(2+) and Fe(3+) heme but the largest fraction is Fe(2+) heme. Functions as a high-affinity heme binding protein and probably has a role in relaying heme-iron from cell wall-anchored isd proteins receptors to the probable permease IsdF. The protein is High-affinity heme uptake system protein IsdE (isdE) of Staphylococcus aureus (strain Mu3 / ATCC 700698).